Here is a 168-residue protein sequence, read N- to C-terminus: Photosystem I assembly protein Ycf3 (168 aa).

TPR repeat units lie at residues 35–68, 72–105, and 120–153; these read AFTYYRDGMSAQSEGNYAEALQNYYEATRPEIDP, SYILYNIGLIHTSNGEHTKALEYYFRALERNPFL, and GEQAIRQGDSEIAETWSDQAAEYWKQAIALTPGN.

It belongs to the Ycf3 family.

It localises to the plastid. The protein resides in the chloroplast thylakoid membrane. Essential for the assembly of the photosystem I (PSI) complex. May act as a chaperone-like factor to guide the assembly of the PSI subunits. This chain is Photosystem I assembly protein Ycf3, found in Amborella trichopoda.